Reading from the N-terminus, the 221-residue chain is Thiamine-phosphate synthase (221 aa).

Residues 44-48 (QLRLK) and Asn-80 contribute to the 4-amino-2-methyl-5-(diphosphooxymethyl)pyrimidine site. Positions 81 and 100 each coordinate Mg(2+). Position 119 (Thr-119) interacts with 4-amino-2-methyl-5-(diphosphooxymethyl)pyrimidine. A 2-[(2R,5Z)-2-carboxy-4-methylthiazol-5(2H)-ylidene]ethyl phosphate-binding site is contributed by 146-148 (TTT). Lys-149 contacts 4-amino-2-methyl-5-(diphosphooxymethyl)pyrimidine. Gly-176 contacts 2-[(2R,5Z)-2-carboxy-4-methylthiazol-5(2H)-ylidene]ethyl phosphate.

Belongs to the thiamine-phosphate synthase family. Mg(2+) serves as cofactor.

The enzyme catalyses 2-[(2R,5Z)-2-carboxy-4-methylthiazol-5(2H)-ylidene]ethyl phosphate + 4-amino-2-methyl-5-(diphosphooxymethyl)pyrimidine + 2 H(+) = thiamine phosphate + CO2 + diphosphate. It carries out the reaction 2-(2-carboxy-4-methylthiazol-5-yl)ethyl phosphate + 4-amino-2-methyl-5-(diphosphooxymethyl)pyrimidine + 2 H(+) = thiamine phosphate + CO2 + diphosphate. It catalyses the reaction 4-methyl-5-(2-phosphooxyethyl)-thiazole + 4-amino-2-methyl-5-(diphosphooxymethyl)pyrimidine + H(+) = thiamine phosphate + diphosphate. It participates in cofactor biosynthesis; thiamine diphosphate biosynthesis; thiamine phosphate from 4-amino-2-methyl-5-diphosphomethylpyrimidine and 4-methyl-5-(2-phosphoethyl)-thiazole: step 1/1. Its function is as follows. Condenses 4-methyl-5-(beta-hydroxyethyl)thiazole monophosphate (THZ-P) and 2-methyl-4-amino-5-hydroxymethyl pyrimidine pyrophosphate (HMP-PP) to form thiamine monophosphate (TMP). The polypeptide is Thiamine-phosphate synthase (Hyphomonas neptunium (strain ATCC 15444)).